Reading from the N-terminus, the 184-residue chain is Ribosome-recycling factor (184 aa).

A disordered region spans residues 133-153; the sequence is DSNDELKKQQKNSDITEDDLR.

This sequence belongs to the RRF family.

Its subcellular location is the cytoplasm. Its function is as follows. Responsible for the release of ribosomes from messenger RNA at the termination of protein biosynthesis. May increase the efficiency of translation by recycling ribosomes from one round of translation to another. In Staphylococcus saprophyticus subsp. saprophyticus (strain ATCC 15305 / DSM 20229 / NCIMB 8711 / NCTC 7292 / S-41), this protein is Ribosome-recycling factor.